We begin with the raw amino-acid sequence, 90 residues long: Small ribosomal subunit protein uS15 (90 aa).

It belongs to the universal ribosomal protein uS15 family. In terms of assembly, part of the 30S ribosomal subunit. Forms a bridge to the 50S subunit in the 70S ribosome, contacting the 23S rRNA.

Its function is as follows. One of the primary rRNA binding proteins, it binds directly to 16S rRNA where it helps nucleate assembly of the platform of the 30S subunit by binding and bridging several RNA helices of the 16S rRNA. Forms an intersubunit bridge (bridge B4) with the 23S rRNA of the 50S subunit in the ribosome. The chain is Small ribosomal subunit protein uS15 from Campylobacter lari (strain RM2100 / D67 / ATCC BAA-1060).